A 137-amino-acid chain; its full sequence is Large ribosomal subunit protein uL16 (137 aa).

The protein belongs to the universal ribosomal protein uL16 family. In terms of assembly, part of the 50S ribosomal subunit.

Functionally, binds 23S rRNA and is also seen to make contacts with the A and possibly P site tRNAs. The chain is Large ribosomal subunit protein uL16 from Francisella tularensis subsp. holarctica (strain FTNF002-00 / FTA).